We begin with the raw amino-acid sequence, 50 residues long: MVIKCIDKQQNLGNIILFLLLKQQYSKEDSKKFTIYKFYLQTVNYTIQLS.

This is an uncharacterized protein from Haemophilus influenzae (strain ATCC 51907 / DSM 11121 / KW20 / Rd).